The chain runs to 558 residues: MVDSGTEARARGKAEAGLQDGISGPAAARVNGKTQAKAVAEAELKTESVTQAKAGDGAMTRTHTVTYREAMAVTREVIKVEDTTKTRVMVQTKTKPLAERSIVPQTKSRAMPISRVSTVTKSEVKVVAVIEANIKSYAKSHDKANTGSRPDRREEASIGMKSSDEDEENICSWFWTGEEPSVGSWFWPEEETSLQVYKPLPKIQEKPKPTHKPTLTIKQTVIAWSRARYIVLVPVEGGEQSFPPEGNWTLVETLIETPLGIRPLTKIPPYHGPYYQTLAEIKKQIRQREKYGPNPKACHCKSRGFSLEPKEFDKLVALLKLTKDPFIHEIATMIMGISPAYPFTQDIIHDVGITVMIENLVSNPNVKEHPRALSMVDDSSESSEGPKSGESYIHQVCKGILSCPMNSPVQLAGLKLLGHLSVKFEDHYVITSYIPDFLTLLNKGSVKTKFYVLKVFSCLSKNHANTRELISAKVLSSLVAPFNKNESKANILNIIEIFENINFQVKTKAKLFTKEKFTKSELISIFQEAKQFGQKLQDLAEHSDPEVRDKVIRLILKL.

2 stretches are compositionally biased toward basic and acidic residues: residues 1–14 and 139–156; these read MVDSGTEARARGKA and KSHDKANTGSRPDRREEA. Disordered stretches follow at residues 1-34 and 139-163; these read MVDSGTEARARGKAEAGLQDGISGPAAARVNGKT and KSHDKANTGSRPDRREEASIGMKSS. 4 ARM repeats span residues 300-339, 422-461, 463-503, and 520-558; these read CKSRGFSLEPKEFDKLVALLKLTKDPFIHEIATMIMGISP, VKFEDHYVITSYIPDFLTLLNKGSVKTKFYVLKVFSCLSK, HANT…NINF, and SELISIFQEAKQFGQKLQDLAEHSDPEVRDKVIRLILKL.

This sequence belongs to the eutherian X-chromosome-specific Armcx family.

The polypeptide is Armadillo repeat-containing X-linked protein 5 (ARMCX5) (Pongo abelii (Sumatran orangutan)).